A 173-amino-acid polypeptide reads, in one-letter code: Co-chaperone protein HscB homolog (173 aa).

Residues 5–77 (CHFALFELQP…AQRARYLLTI (73 aa)) form the J domain.

This sequence belongs to the HscB family. In terms of assembly, interacts with HscA and stimulates its ATPase activity.

Co-chaperone involved in the maturation of iron-sulfur cluster-containing proteins. Seems to help targeting proteins to be folded toward HscA. In Pseudomonas fluorescens (strain Pf0-1), this protein is Co-chaperone protein HscB homolog.